A 567-amino-acid polypeptide reads, in one-letter code: Geranylgeranyl transferase type-2 subunit alpha (567 aa).

PFTA repeat units lie at residues 44–78 (LDES…HLET), 88–122 (LVKA…RLPE), 124–158 (NWAR…QAAV), 159–193 (APAE…QLHP), 207–241 (VLLK…RAEP), and 363–397 (VLQS…ALDP). Residue Ser98 is modified to Phosphoserine. LRR repeat units follow at residues 442–463 (DVRV…EQLL), 464–486 (LVTH…AALR), 487–508 (CLEV…ANLP), 509–530 (RLQE…QPLV), and 534–555 (RLVL…QERL).

It belongs to the protein prenyltransferase subunit alpha family. In terms of assembly, heterotrimer composed of RABGGTA, RABGGTB and CHM; within this trimer, RABGGTA and RABGGTB form the catalytic component B, while CHM (component A) mediates peptide substrate binding. The Rab GGTase dimer (RGGT) interacts with CHM (component A) prior to Rab protein binding; the association is stabilized by geranylgeranyl pyrophosphate (GGpp). The CHM:RGGT:Rab complex is destabilized by GGpp. Interacts with non-phosphorylated form of RAB8A; phosphorylation of RAB8A at 'Thr-72' disrupts this interaction. As to expression, most abundant in the heart, brain, spleen and liver. Less in the lung, muscle, kidney and testis; in these tissues less abundant than the beta subunit.

It catalyses the reaction geranylgeranyl diphosphate + L-cysteinyl-[protein] = S-geranylgeranyl-L-cysteinyl-[protein] + diphosphate. The enzymatic reaction requires the aid of a Rab escort protein (also called component A), such as CHM. Its function is as follows. Catalyzes the transfer of a geranylgeranyl moiety from geranylgeranyl diphosphate to both cysteines of Rab proteins with the C-terminal sequence -XXCC, -XCXC and -CCXX, such as RAB1A, RAB3A, RAB5A and RAB7A. The chain is Geranylgeranyl transferase type-2 subunit alpha (Rabggta) from Rattus norvegicus (Rat).